A 660-amino-acid chain; its full sequence is Secretin PulD (660 aa).

The N-terminal stretch at 1 to 27 (MIIANVIRSFSLTLLIFAALLFRPAAA) is a signal peptide. The tract at residues 28–124 (EEFSASFKGT…VASDAAPGIG (97 aa)) is N0. The tract at residues 126 to 190 (EVVTRVVPLT…TIVERVDNAG (65 aa)) is N1. Residues 191-264 (DRSVVTVPLS…MIKQLDRQQA (74 aa)) form an N2 region. Residues 267–341 (GNTKVIYLKY…DLERVIAQLD (75 aa)) are N3. The secretin stretch occupies residues 346 to 596 (QVLVEAIIAE…LFIRPTVIRD (251 aa)). Residues 598–660 (DEYRQASSGQ…IDAFNLGGNL (63 aa)) are s domain.

It belongs to the bacterial secretin family. GSP D subfamily. Forms a cylindrical channel with 15 subunits.

It is found in the cell outer membrane. Functionally, involved in a type II secretion system (T2SS, formerly general secretion pathway, GSP) for the export of proteins. Required for the translocation of pullulanase. This subunit forms the outer membrane channel. This is Secretin PulD (pulD) from Klebsiella pneumoniae.